The primary structure comprises 700 residues: uncharacterized protein (700 aa).

9 helical membrane passes run 24-44 (VLCL…GLLF), 67-87 (LIIG…LLAK), 89-109 (VPLP…AELG), 115-135 (LLPA…YMPV), 139-159 (LLIY…WFWI), 383-403 (LMGT…VLLV), 420-440 (VGTV…IPEG), 461-481 (YGWA…LLWL), and 491-511 (LIDT…LWPQ).

This sequence belongs to the YccS/YhfK family.

The protein localises to the cell membrane. This is an uncharacterized protein from Escherichia coli (strain K12).